The chain runs to 556 residues: Phenylalanine--tRNA ligase beta subunit (556 aa).

One can recognise a B5 domain in the interval 269–345 (MEPEEVVYDV…MGYGYERIEP (77 aa)). 4 residues coordinate Mg(2+): Asp323, Asp329, Glu332, and Glu333.

The protein belongs to the phenylalanyl-tRNA synthetase beta subunit family. Type 2 subfamily. As to quaternary structure, tetramer of two alpha and two beta subunits. It depends on Mg(2+) as a cofactor.

The protein localises to the cytoplasm. It catalyses the reaction tRNA(Phe) + L-phenylalanine + ATP = L-phenylalanyl-tRNA(Phe) + AMP + diphosphate + H(+). This chain is Phenylalanine--tRNA ligase beta subunit, found in Thermofilum pendens (strain DSM 2475 / Hrk 5).